Consider the following 702-residue polypeptide: Elongation factor G (702 aa).

Residues 8–196 (ERYRNIGISA…MKAIIWDEAS (189 aa)) enclose the tr-type G domain. Residues 17–24 (AHIDAGKT), 88–92 (DTPGH), and 142–145 (NKMD) each bind GTP.

Belongs to the TRAFAC class translation factor GTPase superfamily. Classic translation factor GTPase family. EF-G/EF-2 subfamily.

It localises to the cytoplasm. In terms of biological role, catalyzes the GTP-dependent ribosomal translocation step during translation elongation. During this step, the ribosome changes from the pre-translocational (PRE) to the post-translocational (POST) state as the newly formed A-site-bound peptidyl-tRNA and P-site-bound deacylated tRNA move to the P and E sites, respectively. Catalyzes the coordinated movement of the two tRNA molecules, the mRNA and conformational changes in the ribosome. In Thiomonas delicata (Thiomonas cuprina), this protein is Elongation factor G (fusA).